Here is a 277-residue protein sequence, read N- to C-terminus: UBX domain-containing protein 10 (277 aa).

A disordered region spans residues 1–102 (MAIEAPVNFA…APDEMPELLL (102 aa)). Residues 16–31 (TVVSTAGDSSTWQPSS) show a composition bias toward polar residues. The segment covering 35–50 (HVIRPKSAKGRKRPNL) has biased composition (basic residues). Low complexity predominate over residues 60 to 77 (SPSALSSSPPPRSSGSPS). Serine 88 carries the post-translational modification Phosphoserine. A UBX domain is found at 191–268 (DEEPRLLLAV…GILHKSVLGI (78 aa)).

The protein belongs to the UBXN10 family. In terms of assembly, interacts with CLUAP1; the interaction is direct and mediates interaction with the intraflagellar transport complex B (IFT-B). Interacts with VCP; the interaction is direct.

It is found in the cell projection. The protein resides in the cilium. Its function is as follows. VCP/p97-binding protein required for ciliogenesis. Acts as a tethering factor that facilitates recruitment of VCP/p97 to the intraflagellar transport complex B (IFT-B) in cilia. UBX domain-containing proteins act as tethering factors for VCP/p97 and may specify substrate specificity of VCP/p97. The chain is UBX domain-containing protein 10 from Mus musculus (Mouse).